The sequence spans 443 residues: KH domain-containing, RNA-binding, signal transduction-associated protein 1 (443 aa).

Residues 1 to 95 (MQRRDDPAAR…LLPPSATAAA (95 aa)) form a disordered region. S18 and S20 each carry phosphoserine. Position 21 is an N6-acetyllysine (K21). S29 bears the Phosphoserine mark. Phosphothreonine is present on T33. Asymmetric dimethylarginine; by PRMT1 occurs at positions 45 and 52. S58 carries the post-translational modification Phosphoserine. Pro residues predominate over residues 61-72 (TQPPPLLPPSNP). Low complexity predominate over residues 81-95 (SAPTPLLPPSATAAA). The residue at position 84 (T84) is a Phosphothreonine; by MAPK1. Glycyl lysine isopeptide (Lys-Gly) (interchain with G-Cter in SUMO2) cross-links involve residues K96 and K102. The tract at residues 100 to 260 (ENKYLPELMA…VKKFLVPDMM (161 aa)) is involved in homodimerization. The residue at position 113 (S113) is a Phosphoserine. K139 participates in a covalent cross-link: Glycyl lysine isopeptide (Lys-Gly) (interchain with G-Cter in SUMO2). A Phosphoserine modification is found at S150. The KH domain occupies 171 to 197 (NFVGKILGPQGNTIKRLQEETGAKISV). K175 is modified (N6-acetyllysine; alternate). A Glycyl lysine isopeptide (Lys-Gly) (interchain with G-Cter in SUMO2); alternate cross-link involves residue K175. T183 carries the post-translational modification Phosphothreonine. The tract at residues 280 to 317 (PSRGRGVSVRGRGAAPPPPPVPRGRGVGPPRGALVRGT) is disordered. An omega-N-methylarginine mark is found at R282, R284, and R291. Low complexity predominate over residues 283–293 (GRGVSVRGRGA). Position 304 is an asymmetric dimethylarginine; by PRMT1 (R304). A compositionally biased stretch (low complexity) spans 307–316 (GPPRGALVRG). Omega-N-methylarginine; by PRMT1 occurs at positions 310 and 315. A Dimethylated arginine; alternate modification is found at R320. R320 is modified (omega-N-methylarginine; by PRMT1; alternate). An Omega-N-methylarginine; by PRMT1 modification is found at R325. The disordered stretch occupies residues 326–345 (GATVTRGVPPPPTVRGAPTP). Residues R331 and R340 each carry the dimethylated arginine; alternate modification. Residues R331 and R340 each carry the omega-N-methylarginine; by PRMT1; alternate modification. At R331 the chain carries Asymmetric dimethylarginine; alternate. The interval 351–443 (GIQRIPLPPT…AYREHPYGRY (93 aa)) is interaction with HNRNPA1. Y387 carries the post-translational modification Phosphotyrosine. S390 is subject to Phosphoserine. An interaction with ZBTB7A region spans residues 400–420 (GHGELQDSYEAYGQDDWNGTR). Residues 411–443 (YGQDDWNGTRPSLKAPPARPVKGAYREHPYGRY) are disordered. K432 is covalently cross-linked (Glycyl lysine isopeptide (Lys-Gly) (interchain with G-Cter in SUMO2)). A compositionally biased stretch (basic and acidic residues) spans 434 to 443 (AYREHPYGRY). Residues Y435, Y440, and Y443 each carry the phosphotyrosine; by PTK6 modification.

Belongs to the KHDRBS family. As to quaternary structure, self-associates to form homooligomers when bound to RNA, oligomerization appears to be limited when binding to proteins. Interacts with KHDRBS3/SLIM-2. Forms a trimeric complex in the nucleus consisting of BANP, HDAC6 and KHDRBS1/SAM68; HDAC6 keeps KHDRBS1 in a deacetylated state which inhibits the inclusion of CD44 alternate exons. The complex is disrupted by MAPK1/MAPK3-mediated phosphorylation of BANP which results in BANP export to the cytoplasm. This facilitates acetylation of KHDRBS1 and CD44 variant exon inclusion. Interacts with KHDRBS2/SLIM-1; heterooligomer formation of KHDRBS family proteins may modulate RNA substrate specificity. Interacts with PIK3R1, PLCG1. Interacts with RASA1, GRB2, SRC, CBP, PRMT1, APC, HNRNPA1. Interacts with PTK6 (via SH3 and SH2 domains). Forms a complex with ILF2, ILF3, YLPM1, RBMX, NCOA5 and PPP1CA. Binds WBP4/FBP21 (via WW domains), FNBP4/FBP30 (via WW domains). Interacts (via Arg/Gly-rich-flanked Pro-rich regions) with FYN (via the SH3 domain). Interacts with the non-receptor tyrosine kinase SRMS; the interaction leads to phosphorylation of KHDRBS1. Interacts with ZBTB7A; negatively regulates KHDRBS1 splicing activity toward BCL2L1. Post-translationally, tyrosine phosphorylated by several non-receptor tyrosine kinases including LCK, FYN and JAK3. Also tyrosine phosphorylated by the non-receptor tyrosine kinase SRMS in an EGF-dependent manner. Phosphorylation by PTK6 negatively regulates its RNA binding ability. Phosphorylation by PTK6 at Tyr-440 dictates the nuclear localization of KHDRBS1. In terms of processing, acetylated. Positively correlates with ability to bind RNA. Deacetylated by HDAC6; this regulates alternative splicing by inhibiting the inclusion of CD44 alternate exons. Arginine methylation is required for nuclear localization, Inhibits interaction with Src-like SH3 domains, but not interaction with WW domains of WBP4/FBP21 and FNBP4/FBP30.

Its subcellular location is the nucleus. It is found in the cytoplasm. It localises to the membrane. Functionally, recruited and tyrosine phosphorylated by several receptor systems, for example the T-cell, leptin and insulin receptors. Once phosphorylated, functions as an adapter protein in signal transduction cascades by binding to SH2 and SH3 domain-containing proteins. Role in G2-M progression in the cell cycle. Represses CBP-dependent transcriptional activation apparently by competing with other nuclear factors for binding to CBP. Also acts as a putative regulator of mRNA stability and/or translation rates and mediates mRNA nuclear export. Positively regulates the association of constitutive transport element (CTE)-containing mRNA with large polyribosomes and translation initiation. May not be involved in the nucleocytoplasmic export of unspliced (CTE)-containing RNA species. RNA-binding protein that plays a role in the regulation of alternative splicing and influences mRNA splice site selection and exon inclusion. Binds to RNA containing 5'-[AU]UAA-3' as a bipartite motif spaced by more than 15 nucleotides. Binds poly(A). Can regulate CD44 alternative splicing in a Ras pathway-dependent manner. In cooperation with HNRNPA1 modulates alternative splicing of BCL2L1 by promoting splicing toward isoform Bcl-X(S), and of SMN1. Can regulate alternative splicing of NRXN1 and NRXN3 in the laminin G-like domain 6 containing the evolutionary conserved neurexin alternative spliced segment 4 (AS4) involved in neurexin selective targeting to postsynaptic partners. In a neuronal activity-dependent manner cooperates synergistically with KHDRBS2/SLIM-1 in regulation of NRXN1 exon skipping at AS4. The cooperation with KHDRBS2/SLIM-1 is antagonistic for regulation of NXRN3 alternative splicing at AS4. The chain is KH domain-containing, RNA-binding, signal transduction-associated protein 1 from Rattus norvegicus (Rat).